Reading from the N-terminus, the 142-residue chain is Putative arsenate reductase (142 aa).

This sequence belongs to the low molecular weight phosphotyrosine protein phosphatase family.

Functionally, reduces arsenate [As(V)] to arsenite [As(III)]. The polypeptide is Putative arsenate reductase (arsC) (Halobacterium salinarum (strain ATCC 700922 / JCM 11081 / NRC-1) (Halobacterium halobium)).